A 369-amino-acid polypeptide reads, in one-letter code: Ubiquinone biosynthesis O-methyltransferase, mitochondrial (369 aa).

The N-terminal 85 residues, 1–85, are a transit peptide targeting the mitochondrion; it reads MWSGRKLGSS…SFRYPWARLY (85 aa). Arg124 is a binding site for S-adenosyl-L-methionine. Residues Lys143 and Lys149 each carry the N6-acetyllysine modification. Residues Gly154 and Asp175 each contribute to the S-adenosyl-L-methionine site. Lys196 carries the post-translational modification N6-acetyllysine. Ser222 contributes to the S-adenosyl-L-methionine binding site. Mg(2+) contacts are provided by Glu223, Glu226, and His227.

The protein belongs to the class I-like SAM-binding methyltransferase superfamily. UbiG/COQ3 family. In terms of assembly, component of a multi-subunit COQ enzyme complex, composed of at least COQ3, COQ4, COQ5, COQ6, COQ7 and COQ9. The cofactor is Mg(2+).

The protein localises to the mitochondrion inner membrane. The enzyme catalyses 3,4-dihydroxy-5-(all-trans-decaprenyl)benzoate + S-adenosyl-L-methionine = 4-hydroxy-3-methoxy-5-(all-trans-decaprenyl)benzoate + S-adenosyl-L-homocysteine + H(+). It carries out the reaction a 3-demethylubiquinone + S-adenosyl-L-methionine = a ubiquinone + S-adenosyl-L-homocysteine. It catalyses the reaction 3-demethylubiquinol-10 + S-adenosyl-L-methionine = ubiquinol-10 + S-adenosyl-L-homocysteine + H(+). The protein operates within cofactor biosynthesis; ubiquinone biosynthesis. In terms of biological role, O-methyltransferase required for two non-consecutive steps during ubiquinone biosynthesis. Catalyzes the 2 O-methylation of 3,4-dihydroxy-5-(all-trans-decaprenyl)benzoic acid into 4-hydroxy-3-methoxy-5-(all-trans-decaprenyl)benzoic acid. Also catalyzes the last step of ubiquinone biosynthesis by mediating methylation of 3-demethylubiquinone into ubiquinone. Also able to mediate the methylation of 3-demethylubiquinol-10 into ubiquinol-10. In Homo sapiens (Human), this protein is Ubiquinone biosynthesis O-methyltransferase, mitochondrial.